The following is a 356-amino-acid chain: Phosphoribosylformylglycinamidine cyclo-ligase (356 aa).

Belongs to the AIR synthase family.

Its subcellular location is the cytoplasm. The catalysed reaction is 2-formamido-N(1)-(5-O-phospho-beta-D-ribosyl)acetamidine + ATP = 5-amino-1-(5-phospho-beta-D-ribosyl)imidazole + ADP + phosphate + H(+). It participates in purine metabolism; IMP biosynthesis via de novo pathway; 5-amino-1-(5-phospho-D-ribosyl)imidazole from N(2)-formyl-N(1)-(5-phospho-D-ribosyl)glycinamide: step 2/2. This is Phosphoribosylformylglycinamidine cyclo-ligase from Acinetobacter baumannii (strain AB307-0294).